We begin with the raw amino-acid sequence, 106 residues long: uncharacterized protein (106 aa).

The protein resides in the mitochondrion. This is an uncharacterized protein from Claviceps purpurea (Ergot fungus).